Reading from the N-terminus, the 721-residue chain is Glucans biosynthesis glucosyltransferase H (721 aa).

Transmembrane regions (helical) follow at residues 53–75 (VLIM…QVLQ), 85–107 (VVLV…ALAG), 404–426 (GIGA…LISL), 456–478 (WVFA…LVLI), 490–512 (LRTF…VMMV), and 567–589 (WPLL…VALL).

The protein belongs to the glycosyltransferase 2 family. OpgH subfamily.

It is found in the cell inner membrane. Its pathway is glycan metabolism; osmoregulated periplasmic glucan (OPG) biosynthesis. Its function is as follows. Involved in the biosynthesis of osmoregulated periplasmic glucans (OPGs). In Rhodopseudomonas palustris (strain ATCC BAA-98 / CGA009), this protein is Glucans biosynthesis glucosyltransferase H.